A 300-amino-acid chain; its full sequence is 4-hydroxy-tetrahydrodipicolinate synthase (300 aa).

Residue Thr57 participates in pyruvate binding. The active-site Proton donor/acceptor is Tyr145. Lys173 serves as the catalytic Schiff-base intermediate with substrate. Ile213 lines the pyruvate pocket.

Belongs to the DapA family. In terms of assembly, homotetramer; dimer of dimers.

Its subcellular location is the cytoplasm. It carries out the reaction L-aspartate 4-semialdehyde + pyruvate = (2S,4S)-4-hydroxy-2,3,4,5-tetrahydrodipicolinate + H2O + H(+). The protein operates within amino-acid biosynthesis; L-lysine biosynthesis via DAP pathway; (S)-tetrahydrodipicolinate from L-aspartate: step 3/4. Its function is as follows. Catalyzes the condensation of (S)-aspartate-beta-semialdehyde [(S)-ASA] and pyruvate to 4-hydroxy-tetrahydrodipicolinate (HTPA). The sequence is that of 4-hydroxy-tetrahydrodipicolinate synthase from Corynebacterium urealyticum (strain ATCC 43042 / DSM 7109).